A 37-amino-acid polypeptide reads, in one-letter code: Dolichyl-diphosphooligosaccharide--protein glycosyltransferase subunit 4 (37 aa).

Over 1–4 (MITD) the chain is Lumenal. A helical transmembrane segment spans residues 5–25 (VQLAIFANMLGVSLFLLVVLY). The Cytoplasmic portion of the chain corresponds to 26-37 (HYVAVNNPKKQE).

Belongs to the OST4 family. As to quaternary structure, component of the oligosaccharyltransferase (OST) complex. OST exists in two different complex forms which contain common core subunits RPN1, RPN2, OST48, OST4, DAD1 and TMEM258, either STT3A or STT3B as catalytic subunits, and form-specific accessory subunits. STT3A complex assembly occurs through the formation of 3 subcomplexes. Subcomplex 1 contains RPN1 and TMEM258, subcomplex 2 contains the STT3A-specific subunits STT3A, DC2/OSTC, and KCP2 as well as the core subunit OST4, and subcomplex 3 contains RPN2, DAD1, and OST48. The STT3A complex can form stable complexes with the Sec61 complex or with both the Sec61 and TRAP complexes.

Its subcellular location is the endoplasmic reticulum. It localises to the endoplasmic reticulum membrane. Its pathway is protein modification; protein glycosylation. In terms of biological role, subunit of the oligosaccharyl transferase (OST) complex that catalyzes the initial transfer of a defined glycan (Glc(3)Man(9)GlcNAc(2) in eukaryotes) from the lipid carrier dolichol-pyrophosphate to an asparagine residue within an Asn-X-Ser/Thr consensus motif in nascent polypeptide chains, the first step in protein N-glycosylation. N-glycosylation occurs cotranslationally and the complex associates with the Sec61 complex at the channel-forming translocon complex that mediates protein translocation across the endoplasmic reticulum (ER). All subunits are required for a maximal enzyme activity. Specifically involved in maintaining stability of STT3A-containing OST complexes. The protein is Dolichyl-diphosphooligosaccharide--protein glycosyltransferase subunit 4 of Homo sapiens (Human).